Consider the following 319-residue polypeptide: Olfactory receptor 8U3 (319 aa).

Over 1 to 25 (MAEVNISYVSEFILKGITDRPELQA) the chain is Extracellular. N-linked (GlcNAc...) asparagine glycosylation occurs at asparagine 5. Residues 26–46 (PCFVMFLTIYLVTVLGNLGLI) form a helical membrane-spanning segment. Residues 47 to 54 (VIIRVDSR) lie on the Cytoplasmic side of the membrane. A helical membrane pass occupies residues 55-75 (LHTPMYFFLSHLAFVDLCYSS). Over 76 to 99 (AITPKMMVNFVVERNTIPFHACAT) the chain is Extracellular. A disulfide bridge connects residues cysteine 97 and cysteine 189. The helical transmembrane segment at 100–120 (QLGCFLTFMITECFLLASMAY) threads the bilayer. Topologically, residues 121–133 (DRYVAICSPLHYS) are cytoplasmic. Residues 134-154 (TLMSKRVCIQLVAVPYVYSFL) form a helical membrane-spanning segment. The Extracellular segment spans residues 155–196 (VALFHTIITFRLTYCGPNVINHFYCDDLPLLALSCSDTHMKE). Residues 197–217 (ILIFAFAGFDMICSSSIVLTS) form a helical membrane-spanning segment. The Cytoplasmic segment spans residues 218 to 237 (YLFIIAAILRIRSTQGRRKA). A helical membrane pass occupies residues 238–258 (ISTCGSHMVAVTIFYGTLIFM). The Extracellular portion of the chain corresponds to 259-271 (YLQPKSNHSLDTD). N-linked (GlcNAc...) asparagine glycosylation occurs at asparagine 265. Residues 272 to 292 (KMASVFYTVVIPMLNPLIYSL) traverse the membrane as a helical segment. Over 293-319 (RNKEVKDASKKALDKGYETLKILRLSK) the chain is Cytoplasmic.

It belongs to the G-protein coupled receptor 1 family.

It is found in the cell membrane. Potential odorant receptor. This Mus musculus (Mouse) protein is Olfactory receptor 8U3.